The primary structure comprises 323 residues: tRNA U34 carboxymethyltransferase (323 aa).

Carboxy-S-adenosyl-L-methionine-binding positions include Lys91, Trp105, Lys110, Gly130, 152 to 154 (DPT), 181 to 182 (IE), Met196, Tyr200, and Arg315.

Belongs to the class I-like SAM-binding methyltransferase superfamily. CmoB family. Homotetramer.

The catalysed reaction is carboxy-S-adenosyl-L-methionine + 5-hydroxyuridine(34) in tRNA = 5-carboxymethoxyuridine(34) in tRNA + S-adenosyl-L-homocysteine + H(+). Functionally, catalyzes carboxymethyl transfer from carboxy-S-adenosyl-L-methionine (Cx-SAM) to 5-hydroxyuridine (ho5U) to form 5-carboxymethoxyuridine (cmo5U) at position 34 in tRNAs. The sequence is that of tRNA U34 carboxymethyltransferase from Salmonella typhimurium (strain LT2 / SGSC1412 / ATCC 700720).